The primary structure comprises 150 residues: Viral late gene transcription factor 2 (150 aa).

Belongs to the orthopoxvirus VLTF-2/OPG126 family. As to quaternary structure, interacts with itself. Interacts with the late transcription factors VLTF-1/OPG093.

Acts with RNA polymerase to initiate transcription from late gene promoters. The polypeptide is Viral late gene transcription factor 2 (OPG126) (Vaccinia virus (strain Western Reserve) (VACV)).